Reading from the N-terminus, the 984-residue chain is Putative formate dehydrogenase SAV2309 (984 aa).

The 77-residue stretch at E3–D79 folds into the 2Fe-2S ferredoxin-type domain. C37, C48, C51, and C63 together coordinate [2Fe-2S] cluster. The 41-residue stretch at D79–G119 folds into the 4Fe-4S His(Cys)3-ligated-type domain. Residues H95, C99, C102, C109, C147, C150, C153, C157, C190, C193, C196, C200, C264, C267, C271, and C299 each contribute to the [4Fe-4S] cluster site. 2 4Fe-4S ferredoxin-type domains span residues P138–T165 and N181–E211. Positions M252 to K984 are formate dehydrogenase. Residues I257–Q313 form the 4Fe-4S Mo/W bis-MGD-type domain.

This sequence in the C-terminal section; belongs to the prokaryotic molybdopterin-containing oxidoreductase family. [2Fe-2S] cluster is required as a cofactor. [4Fe-4S] cluster serves as cofactor. Requires Mo-bis(molybdopterin guanine dinucleotide) as cofactor.

It carries out the reaction formate + NAD(+) = CO2 + NADH. This is Putative formate dehydrogenase SAV2309 from Staphylococcus aureus (strain Mu50 / ATCC 700699).